A 282-amino-acid polypeptide reads, in one-letter code: Polyamine aminopropyltransferase (282 aa).

One can recognise a PABS domain in the interval 11–239; it reads IEWYPRGYGV…SPWSFLVGVK (229 aa). Glutamine 36 lines the S-methyl-5'-thioadenosine pocket. 2 residues coordinate spermidine: histidine 67 and aspartate 91. Residues glutamate 111 and 142-143 each bind S-methyl-5'-thioadenosine; that span reads DG. Aspartate 160 serves as the catalytic Proton acceptor. Spermidine is bound at residue 160-163; sequence DSTD. Residue proline 167 participates in S-methyl-5'-thioadenosine binding.

This sequence belongs to the spermidine/spermine synthase family. In terms of assembly, homodimer or homotetramer.

Its subcellular location is the cytoplasm. The enzyme catalyses S-adenosyl 3-(methylsulfanyl)propylamine + putrescine = S-methyl-5'-thioadenosine + spermidine + H(+). The protein operates within amine and polyamine biosynthesis; spermidine biosynthesis; spermidine from putrescine: step 1/1. Its function is as follows. Catalyzes the irreversible transfer of a propylamine group from the amino donor S-adenosylmethioninamine (decarboxy-AdoMet) to putrescine (1,4-diaminobutane) to yield spermidine. The polypeptide is Polyamine aminopropyltransferase (Thermococcus onnurineus (strain NA1)).